Consider the following 256-residue polypeptide: Neuroendocrine secretory protein 55 (256 aa).

The first 46 residues, methionine 1 to alanine 46, serve as a signal peptide directing secretion. The segment at serine 61–histidine 256 is disordered. The segment covering glutamate 86–cysteine 103 has biased composition (basic and acidic residues). Composition is skewed to acidic residues over residues leucine 104–proline 139 and leucine 206–serine 216. Basic residues predominate over residues glutamine 225 to arginine 236.

The protein belongs to the NESP55 family. In terms of processing, binds keratan sulfate chains. May be proteolytically processed to give rise to a number of active peptides.

Its subcellular location is the cytoplasmic vesicle. The protein localises to the secretory vesicle. It is found in the synaptic vesicle. The protein resides in the secreted. This chain is Neuroendocrine secretory protein 55, found in Rattus norvegicus (Rat).